Here is a 346-residue protein sequence, read N- to C-terminus: Eukaryotic translation initiation factor 3 subunit I (346 aa).

WD repeat units lie at residues 8 to 49 (GHER…GTYH), 50 to 91 (GHQG…KTWD), 145 to 184 (CEDS…LLYN), 189 to 228 (ELNQ…VLKT), and 286 to 325 (GHFG…FDFM).

Belongs to the eIF-3 subunit I family. In terms of assembly, component of the eukaryotic translation initiation factor 3 (eIF-3) complex.

The protein resides in the cytoplasm. In terms of biological role, component of the eukaryotic translation initiation factor 3 (eIF-3) complex, which is involved in protein synthesis of a specialized repertoire of mRNAs and, together with other initiation factors, stimulates binding of mRNA and methionyl-tRNAi to the 40S ribosome. The eIF-3 complex specifically targets and initiates translation of a subset of mRNAs involved in cell proliferation. This chain is Eukaryotic translation initiation factor 3 subunit I (tif-34), found in Neurospora crassa (strain ATCC 24698 / 74-OR23-1A / CBS 708.71 / DSM 1257 / FGSC 987).